The sequence spans 534 residues: (R)-citramalate synthase (534 aa).

A Pyruvate carboxyltransferase domain is found at 11–274; sequence FHVFDTTLRD…KQVLPEGRLR (264 aa).

The protein belongs to the alpha-IPM synthase/homocitrate synthase family.

The enzyme catalyses pyruvate + acetyl-CoA + H2O = (3R)-citramalate + CoA + H(+). It functions in the pathway amino-acid biosynthesis; L-isoleucine biosynthesis; 2-oxobutanoate from pyruvate: step 1/3. In terms of biological role, catalyzes the condensation of pyruvate and acetyl-coenzyme A to form (R)-citramalate. The sequence is that of (R)-citramalate synthase from Streptomyces coelicolor (strain ATCC BAA-471 / A3(2) / M145).